Consider the following 61-residue polypeptide: Metallothionein-2 (61 aa).

M1 is subject to N-acetylmethionine. Residues 1 to 29 are beta; that stretch reads MDPNCSCTAGESCTCAGSCKCKDCKCASC. Residues C5, C7, C13, C15, C19, C21, C24, C26, C29, C33, C34, C36, C37, C41, C44, C48, C50, and C57 each coordinate a divalent metal cation. Positions 30 to 61 are alpha; sequence KKSCCSCCPVGCAKCAQGCVCKGASDKCSCCA. S58 is subject to Phosphoserine. Residues C59 and C60 each coordinate a divalent metal cation.

Belongs to the metallothionein superfamily. Type 1 family. In terms of assembly, interacts with EOLA1.

Its function is as follows. Metallothioneins have a high content of cysteine residues that bind various heavy metals; these proteins are transcriptionally regulated by both heavy metals and glucocorticoids. The chain is Metallothionein-2 (MT2A) from Ovis aries (Sheep).